A 615-amino-acid chain; its full sequence is uncharacterized protein (615 aa).

3 stretches are compositionally biased toward polar residues: residues 1-11, 41-55, and 128-140; these read MSETSSNSPAS, LSQNAQGASKSSSKV, and TSGSSTGLSNAPP. Disordered stretches follow at residues 1-61 and 97-149; these read MSET…QALV and HQNH…KASS. 2 positions are modified to phosphoserine: Ser-149 and Ser-152. The tract at residues 181–217 is disordered; that stretch reads LIHPEQTDRGLPYAPDEKFHNSGSLKLPKGASLEDLS. 2 positions are modified to phosphoserine: Ser-219 and Ser-275. 3 disordered regions span residues 266-481, 493-565, and 586-615; these read KPLA…KFTG, RLQK…KPSF, and GVETRKEVEPKEEAVIPEEDVEVEVETEEQ. A compositionally biased stretch (polar residues) spans 272-283; sequence RQRSTADLTESD. Residues Thr-276 and Thr-297 each carry the phosphothreonine modification. Basic and acidic residues predominate over residues 312 to 323; sequence EAEKGFYTKDGE. Positions 356–376 are enriched in low complexity; it reads PSLSSASQPSAASSSSSSEPS. A compositionally biased stretch (polar residues) spans 505–522; that stretch reads PNKSKSPSGTKSPASGET. Thr-514 is subject to Phosphothreonine. Ser-516 carries the post-translational modification Phosphoserine. Positions 586–599 are enriched in basic and acidic residues; the sequence is GVETRKEVEPKEEA. Residues 600–615 are compositionally biased toward acidic residues; that stretch reads VIPEEDVEVEVETEEQ.

This is an uncharacterized protein from Schizosaccharomyces pombe (strain 972 / ATCC 24843) (Fission yeast).